Here is a 318-residue protein sequence, read N- to C-terminus: Carbamate kinase (318 aa).

The protein belongs to the carbamate kinase family.

It localises to the cytoplasm. The enzyme catalyses hydrogencarbonate + NH4(+) + ATP = carbamoyl phosphate + ADP + H2O + H(+). Its pathway is metabolic intermediate metabolism; carbamoyl phosphate degradation; CO(2) and NH(3) from carbamoyl phosphate: step 1/1. The protein is Carbamate kinase (arcC) of Lentilactobacillus hilgardii (Lactobacillus hilgardii).